A 344-amino-acid chain; its full sequence is Dihydroorotase (344 aa).

Zn(2+) is bound by residues His13 and His15. Residues 15 to 17 and Asn41 each bind substrate; that span reads HFR. 3 residues coordinate Zn(2+): Lys98, His135, and His173. Lys98 bears the N6-carboxylysine mark. His135 serves as a coordination point for substrate. Leu218 is a binding site for substrate. Asp246 provides a ligand contact to Zn(2+). Asp246 is a catalytic residue. Residues His250 and Ala262 each coordinate substrate.

This sequence belongs to the metallo-dependent hydrolases superfamily. DHOase family. Class II DHOase subfamily. In terms of assembly, homodimer. Zn(2+) is required as a cofactor.

It catalyses the reaction (S)-dihydroorotate + H2O = N-carbamoyl-L-aspartate + H(+). It functions in the pathway pyrimidine metabolism; UMP biosynthesis via de novo pathway; (S)-dihydroorotate from bicarbonate: step 3/3. Its function is as follows. Catalyzes the reversible cyclization of carbamoyl aspartate to dihydroorotate. The sequence is that of Dihydroorotase from Shewanella woodyi (strain ATCC 51908 / MS32).